The following is a 231-amino-acid chain: Protein OPG061 (231 aa).

The protein belongs to the orthopoxvirus OPG058 family.

The protein resides in the host nucleus. It localises to the host nucleolus. This is Protein OPG061 (OPG061) from Variola virus.